The sequence spans 140 residues: Nuclear receptor 2C2-associated protein (140 aa).

The protein belongs to the NR2C2AP family. In terms of assembly, interacts with NR2C2/TR4.

The protein localises to the nucleus. May act as a repressor of NR2C2-mediated transactivation by suppressing the binding between NR2C2/TR4 and the TR4-response element in target genes. The polypeptide is Nuclear receptor 2C2-associated protein (NR2C2AP) (Bos taurus (Bovine)).